Consider the following 365-residue polypeptide: tRNA/tmRNA (uracil-C(5))-methyltransferase (365 aa).

Residues Gln189, Tyr217, Asn222, Glu238, and Asp298 each coordinate S-adenosyl-L-methionine. Catalysis depends on Cys323, which acts as the Nucleophile. Glu357 functions as the Proton acceptor in the catalytic mechanism.

Belongs to the class I-like SAM-binding methyltransferase superfamily. RNA M5U methyltransferase family. TrmA subfamily.

The enzyme catalyses uridine(54) in tRNA + S-adenosyl-L-methionine = 5-methyluridine(54) in tRNA + S-adenosyl-L-homocysteine + H(+). The catalysed reaction is uridine(341) in tmRNA + S-adenosyl-L-methionine = 5-methyluridine(341) in tmRNA + S-adenosyl-L-homocysteine + H(+). Dual-specificity methyltransferase that catalyzes the formation of 5-methyluridine at position 54 (m5U54) in all tRNAs, and that of position 341 (m5U341) in tmRNA (transfer-mRNA). In Shewanella baltica (strain OS155 / ATCC BAA-1091), this protein is tRNA/tmRNA (uracil-C(5))-methyltransferase.